A 698-amino-acid chain; its full sequence is Phenylalanine aminomutase (L-beta-phenylalanine forming) (698 aa).

Residue tyrosine 80 is the Proton donor/acceptor of the active site. The 5-imidazolinone (Ala-Gly) cross-link spans 175–177 (ASG). At serine 176 the chain carries 2,3-didehydroalanine (Ser). Asparagine 231, glutamine 319, arginine 325, asparagine 355, lysine 427, glutamate 455, and asparagine 458 together coordinate (E)-cinnamate.

The protein belongs to the PAL/histidase family. As to quaternary structure, homotetramer. Contains an active site 4-methylidene-imidazol-5-one (MIO), which is formed autocatalytically by cyclization and dehydration of residues Ala-Ser-Gly.

It is found in the cytoplasm. The enzyme catalyses L-phenylalanine = L-beta-phenylalanine. It carries out the reaction L-phenylalanine = (E)-cinnamate + NH4(+). It functions in the pathway alkaloid biosynthesis; taxol biosynthesis. Its pathway is phenylpropanoid metabolism; trans-cinnamate biosynthesis; trans-cinnamate from L-phenylalanine: step 1/1. Functionally, phenylalanine aminomutase that catalyzes the rearrangement of L-phenylalanine to R-beta-phenylalanine. Catalyzes the first committed step in the biosynthesis of the side chain of the alkaloid taxol (paclitaxel), a widely-used compound with antitumor activity. Also has low phenylalanine ammonia-lyase activity. The polypeptide is Phenylalanine aminomutase (L-beta-phenylalanine forming) (pam) (Taxus canadensis (Canadian yew)).